A 253-amino-acid chain; its full sequence is Electron transfer flavoprotein subunit beta, mitochondrial (253 aa).

It belongs to the ETF beta-subunit/FixA family. In terms of assembly, heterodimer of an alpha and a beta subunit. The cofactor is FAD. AMP serves as cofactor.

Its subcellular location is the mitochondrion matrix. Its function is as follows. The electron transfer flavoprotein serves as a specific electron acceptor for several dehydrogenases, including five acyl-CoA dehydrogenases, glutaryl-CoA and sarcosine dehydrogenase. It transfers the electrons to the main mitochondrial respiratory chain via ETF-ubiquinone oxidoreductase (ETF dehydrogenase). The chain is Electron transfer flavoprotein subunit beta, mitochondrial (ETFB) from Oryza sativa subsp. indica (Rice).